Reading from the N-terminus, the 61-residue chain is Small ribosomal subunit protein uS14 (61 aa).

Residues cysteine 24, cysteine 27, cysteine 40, and cysteine 43 each contribute to the Zn(2+) site.

Belongs to the universal ribosomal protein uS14 family. Zinc-binding uS14 subfamily. As to quaternary structure, part of the 30S ribosomal subunit. Contacts proteins S3 and S10. The cofactor is Zn(2+).

In terms of biological role, binds 16S rRNA, required for the assembly of 30S particles and may also be responsible for determining the conformation of the 16S rRNA at the A site. The polypeptide is Small ribosomal subunit protein uS14 (Geotalea uraniireducens (strain Rf4) (Geobacter uraniireducens)).